A 472-amino-acid polypeptide reads, in one-letter code: Divalent metal cation transporter MntH (472 aa).

A run of 11 helical transmembrane segments spans residues 59–79 (LLAF…PGNW), 92–112 (MLLS…ALAA), 144–164 (LAII…LNLL), 167–187 (VPII…LLLM), 196–216 (AFVI…IVLA), 233–253 (VVAD…TVMP), 288–308 (LALM…AAVF), 325–345 (LLAP…ALLA), 377–397 (VLTR…YGEQ), 402–422 (LLLL…IPLL), and 439–459 (WLMV…VKLL).

Belongs to the NRAMP family.

It is found in the cell inner membrane. Functionally, h(+)-stimulated, divalent metal cation uptake system. The chain is Divalent metal cation transporter MntH from Xylella fastidiosa (strain Temecula1 / ATCC 700964).